The chain runs to 206 residues: Small ribosomal subunit protein uS4 (206 aa).

Residues 96-156 enclose the S4 RNA-binding domain; sequence GRLDNVVYRM…EKAKKQSRVK (61 aa).

The protein belongs to the universal ribosomal protein uS4 family. As to quaternary structure, part of the 30S ribosomal subunit. Contacts protein S5. The interaction surface between S4 and S5 is involved in control of translational fidelity.

Its function is as follows. One of the primary rRNA binding proteins, it binds directly to 16S rRNA where it nucleates assembly of the body of the 30S subunit. Functionally, with S5 and S12 plays an important role in translational accuracy. This is Small ribosomal subunit protein uS4 from Yersinia enterocolitica serotype O:8 / biotype 1B (strain NCTC 13174 / 8081).